The sequence spans 446 residues: MRECISVHIGQAGVQIGNACWELFCLEHSIQPDGTFSDPPSSDDSFATFFRETSMSKYVPRAIMVDLEPTVVDEVRTGTYRHLFHPEQLITGKEDAANNYARGHYTVGKDKVDMVSDRIRKLADSCSGLQGFLIFHSFGGGTGSGFTSLLMERLSVEYGKKSKLEFAIYPAPQASSAVVEPYNSVLTTHTTLEHSDCVFMVDNEAIYDICHRNLDIERPTYTNLNRLISQIVSSITASLRFDGALNVDLTEFQTNLVPFPRIHFPLVTYAPIISSDRAYHEQLSVAEITSSCFEPNNQMVKCDPQQGKYMACCMLYRGDVVPKDVNVAIAAIKTNRSLQFVDWCPTGFKVGINYQPPIPTPGGDLAQVQRAVCMLSNTTAIAEAWARLDHKFDLMYAKRAFVHWYVSEGMEEGEFAEAREDLAALEKDYDEVATDLFEDENEAGDS.

The MREC motif motif lies at 1–4 (MREC). Residues glutamine 11, glutamate 68, serine 137, glycine 141, threonine 142, serine 176, asparagine 203, and asparagine 225 each coordinate GTP. Glutamate 68 is a binding site for Mg(2+). Glutamate 251 is a catalytic residue.

The protein belongs to the tubulin family. Dimer of alpha and beta chains. A typical microtubule is a hollow water-filled tube with an outer diameter of 25 nm and an inner diameter of 15 nM. Alpha-beta heterodimers associate head-to-tail to form protofilaments running lengthwise along the microtubule wall with the beta-tubulin subunit facing the microtubule plus end conferring a structural polarity. Microtubules usually have 13 protofilaments but different protofilament numbers can be found in some organisms and specialized cells. Mg(2+) serves as cofactor. Some glutamate residues at the C-terminus are polyglycylated, resulting in polyglycine chains on the gamma-carboxyl group. Glycylation is mainly limited to tubulin incorporated into axonemes (cilia and flagella) whereas glutamylation is prevalent in neuronal cells, centrioles, axonemes, and the mitotic spindle. Both modifications can coexist on the same protein on adjacent residues, and lowering polyglycylation levels increases polyglutamylation, and reciprocally. The precise function of polyglycylation is still unclear. In terms of processing, some glutamate residues at the C-terminus are polyglutamylated, resulting in polyglutamate chains on the gamma-carboxyl group. Polyglutamylation plays a key role in microtubule severing by spastin (SPAST). SPAST preferentially recognizes and acts on microtubules decorated with short polyglutamate tails: severing activity by SPAST increases as the number of glutamates per tubulin rises from one to eight, but decreases beyond this glutamylation threshold. In terms of tissue distribution, testis specific.

The protein resides in the cytoplasm. It is found in the cytoskeleton. The catalysed reaction is GTP + H2O = GDP + phosphate + H(+). In terms of biological role, tubulin is the major constituent of microtubules, a cylinder consisting of laterally associated linear protofilaments composed of alpha- and beta-tubulin heterodimers. Microtubules grow by the addition of GTP-tubulin dimers to the microtubule end, where a stabilizing cap forms. Below the cap, tubulin dimers are in GDP-bound state, owing to GTPase activity of alpha-tubulin. This chain is Tubulin alpha-2 chain, found in Gallus gallus (Chicken).